The following is a 160-amino-acid chain: 6,7-dimethyl-8-ribityllumazine synthase (160 aa).

5-amino-6-(D-ribitylamino)uracil is bound by residues Trp27, 59-61, and 81-83; these read AIE and VVI. 86–87 is a binding site for (2S)-2-hydroxy-3-oxobutyl phosphate; the sequence is QT. Residue His89 is the Proton donor of the active site. Asn114 is a binding site for 5-amino-6-(D-ribitylamino)uracil. Arg128 is a binding site for (2S)-2-hydroxy-3-oxobutyl phosphate.

Belongs to the DMRL synthase family. In terms of assembly, homopentamer.

It carries out the reaction (2S)-2-hydroxy-3-oxobutyl phosphate + 5-amino-6-(D-ribitylamino)uracil = 6,7-dimethyl-8-(1-D-ribityl)lumazine + phosphate + 2 H2O + H(+). It participates in cofactor biosynthesis; riboflavin biosynthesis; riboflavin from 2-hydroxy-3-oxobutyl phosphate and 5-amino-6-(D-ribitylamino)uracil: step 1/2. In terms of biological role, catalyzes the formation of 6,7-dimethyl-8-ribityllumazine by condensation of 5-amino-6-(D-ribitylamino)uracil with 3,4-dihydroxy-2-butanone 4-phosphate. This is the penultimate step in the biosynthesis of riboflavin. The polypeptide is 6,7-dimethyl-8-ribityllumazine synthase (ribH) (Mycobacterium tuberculosis (strain CDC 1551 / Oshkosh)).